Consider the following 417-residue polypeptide: Tyrosine--tRNA ligase (417 aa).

Tyr39 contacts L-tyrosine. The short motif at 44-53 (CTARSLHIGN) is the 'HIGH' region element. The L-tyrosine site is built by Tyr176 and Gln180. A 'KMSKS' region motif is present at residues 236–240 (KMGKT). Lys239 is an ATP binding site. The S4 RNA-binding domain maps to 350-417 (FGVLNAFVKA…KKKHILIKPA (68 aa)).

The protein belongs to the class-I aminoacyl-tRNA synthetase family. TyrS type 1 subfamily. As to quaternary structure, homodimer.

The protein localises to the cytoplasm. It carries out the reaction tRNA(Tyr) + L-tyrosine + ATP = L-tyrosyl-tRNA(Tyr) + AMP + diphosphate + H(+). Catalyzes the attachment of tyrosine to tRNA(Tyr) in a two-step reaction: tyrosine is first activated by ATP to form Tyr-AMP and then transferred to the acceptor end of tRNA(Tyr). The chain is Tyrosine--tRNA ligase from Bradyrhizobium diazoefficiens (strain JCM 10833 / BCRC 13528 / IAM 13628 / NBRC 14792 / USDA 110).